Reading from the N-terminus, the 66-residue chain is Panusin (66 aa).

A signal peptide spans 1–22; it reads MKTKAVLMLMLLVLVAATLVQG. A propeptide spanning residues 23 to 26 is cleaved from the precursor; sequence EPEP. 3 disulfides stabilise this stretch: Cys-32/Cys-54, Cys-39/Cys-61, and Cys-44/Cys-60. A Tyrosine amide modification is found at Tyr-65.

As to quaternary structure, forms dimers and higher-order oligomers. In terms of processing, contains 3 disulfide bonds.

Antimicrobial peptide. Has antibacterial activity against Gram-positive bacteria S.aureus ATCC 29737 and B.subtilis ATCC 6633 as well as against Gram-negative bacteria E.coli ATCC 10536 and K.pneumoniae ATCC 10031. The protein is Panusin of Panulirus argus (Caribbean spiny lobster).